The sequence spans 245 residues: MYPVDLHMHTVASTHAYSTLSDYIAEAKRKGIKLFAITDHGPDMEDAPHHWHFINMRIWPRLVDGVGILRGIEANIKNINGEIDCSGKMFDSLDLIIAGFHELVFAPHDKETNTQAMIATIASGKVHIISHPGNPKYPVEVKAVAQAAAKHHVALEINNSSFLHSRKGSEDNCRAVAAAVRDAGGWVALGSDSHTAFTLGDFTECRKILDAVDFPEDRILNVSPQRLLSFLESRGMAPVPEFAEL.

Residues His-7, His-9, His-15, His-40, Glu-73, His-101, His-131, Asp-192, and His-194 each coordinate Zn(2+).

It belongs to the PHP family. As to quaternary structure, homotrimer. It depends on Zn(2+) as a cofactor.

This is Probable phosphatase YcdX from Salmonella arizonae (strain ATCC BAA-731 / CDC346-86 / RSK2980).